Reading from the N-terminus, the 257-residue chain is Fimbrial assembly protein, serogroup E1 (257 aa).

This chain is Fimbrial assembly protein, serogroup E1 (fimB), found in Dichelobacter nodosus (Bacteroides nodosus).